The sequence spans 436 residues: Acetylcholine receptor non-alpha chain (436 aa).

Over 1-195 the chain is Extracellular; it reads IIDVHEIDQI…IFYLELRRKP (195 aa). Asn62 carries N-linked (GlcNAc...) asparagine glycosylation. Residues Cys89 and Cys103 are joined by a disulfide bond. A glycan (N-linked (GlcNAc...) asparagine) is linked at Asn140. The next 3 helical transmembrane spans lie at 196–219, 227–245, and 261–280; these read LFYTVNLVFPCVGISFLTIVAFYL, VTLCILILVALTVFYLLLK, and YLLFTMIMVSLSVLVTVISL. Over 281–404 the chain is Cytoplasmic; it reads NLHFRRPSTH…WKFVARVLDR (124 aa). A helical transmembrane segment spans residues 405-423; the sequence is LFLLLFSIACFLGTILILF.

This sequence belongs to the ligand-gated ion channel (TC 1.A.9) family. Acetylcholine receptor (TC 1.A.9.1) subfamily.

The protein localises to the postsynaptic cell membrane. It is found in the cell membrane. In terms of biological role, after binding acetylcholine, the AChR responds by an extensive change in conformation that affects all subunits and leads to opening of an ion-conducting channel across the plasma membrane. This Onchocerca volvulus protein is Acetylcholine receptor non-alpha chain.